The sequence spans 135 residues: MATFHFDLVSPEKLAFSGEVDQVDVPGIEGDFGVLANHAPVVAVIRPGILTVITGGNQQKIVVLGGIAEVSEKGLTVLADVATSVADLDAAMFAQTVSSMESALAGKQGSELDRAIERLDHYKNIQHQLTATAMH.

The protein belongs to the ATPase epsilon chain family. In terms of assembly, F-type ATPases have 2 components, CF(1) - the catalytic core - and CF(0) - the membrane proton channel. CF(1) has five subunits: alpha(3), beta(3), gamma(1), delta(1), epsilon(1). CF(0) has three main subunits: a, b and c.

It localises to the cell inner membrane. Produces ATP from ADP in the presence of a proton gradient across the membrane. The protein is ATP synthase epsilon chain of Rhodopseudomonas palustris (strain BisA53).